The chain runs to 546 residues: Methionine--tRNA ligase (546 aa).

A 'HIGH' region motif is present at residues 15-25 (PYANGPIHLGH). Positions 146, 149, 159, and 162 each coordinate Zn(2+). Residues 332 to 336 (KMSKS) carry the 'KMSKS' region motif. K335 is a binding site for ATP.

Belongs to the class-I aminoacyl-tRNA synthetase family. MetG type 1 subfamily. As to quaternary structure, monomer. Zn(2+) serves as cofactor.

Its subcellular location is the cytoplasm. The enzyme catalyses tRNA(Met) + L-methionine + ATP = L-methionyl-tRNA(Met) + AMP + diphosphate. Functionally, is required not only for elongation of protein synthesis but also for the initiation of all mRNA translation through initiator tRNA(fMet) aminoacylation. This chain is Methionine--tRNA ligase, found in Coxiella burnetii (strain RSA 331 / Henzerling II).